The following is a 290-amino-acid chain: GTPase Era (290 aa).

An Era-type G domain is found at 2 to 169 (KSGFAAILGR…KNKIYENFSE (168 aa)). Residues 10-17 (GRPSTGKS) form a G1 region. Position 10-17 (10-17 (GRPSTGKS)) interacts with GTP. Positions 36 to 40 (QTTRN) are G2. A G3 region spans residues 57 to 60 (DTPG). GTP is bound by residues 57–61 (DTPGF) and 119–122 (NKID). A G4 region spans residues 119-122 (NKID). The segment at 148–150 (ISA) is G5. The KH type-2 domain maps to 200–276 (LKEELPYSLY…NLFLQVKLKK (77 aa)).

This sequence belongs to the TRAFAC class TrmE-Era-EngA-EngB-Septin-like GTPase superfamily. Era GTPase family. Monomer.

It localises to the cytoplasm. It is found in the cell inner membrane. Functionally, an essential GTPase that binds both GDP and GTP, with rapid nucleotide exchange. Plays a role in 16S rRNA processing and 30S ribosomal subunit biogenesis and possibly also in cell cycle regulation and energy metabolism. The chain is GTPase Era from Borreliella burgdorferi (strain ATCC 35210 / DSM 4680 / CIP 102532 / B31) (Borrelia burgdorferi).